Reading from the N-terminus, the 211-residue chain is Probable nicotinate-nucleotide adenylyltransferase (211 aa).

Belongs to the NadD family.

It catalyses the reaction nicotinate beta-D-ribonucleotide + ATP + H(+) = deamido-NAD(+) + diphosphate. It functions in the pathway cofactor biosynthesis; NAD(+) biosynthesis; deamido-NAD(+) from nicotinate D-ribonucleotide: step 1/1. Its function is as follows. Catalyzes the reversible adenylation of nicotinate mononucleotide (NaMN) to nicotinic acid adenine dinucleotide (NaAD). In Shewanella sediminis (strain HAW-EB3), this protein is Probable nicotinate-nucleotide adenylyltransferase.